A 944-amino-acid chain; its full sequence is Protein translocase subunit SecA (944 aa).

Residues Gln-87, 105–109, and Asp-494 contribute to the ATP site; that span reads GEGKT. Residues 894-944 form a disordered region; it reads HAAAAGDGEEKPRPKQETVVRTQPKVGRNDPCPCGSGKKYKKCHGATEAAV. Positions 901 to 911 are enriched in basic and acidic residues; that stretch reads GEEKPRPKQET. Positions 925, 927, 936, and 937 each coordinate Zn(2+).

Belongs to the SecA family. In terms of assembly, monomer and homodimer. Part of the essential Sec protein translocation apparatus which comprises SecA, SecYEG and auxiliary proteins SecDF-YajC and YidC. Requires Zn(2+) as cofactor.

It localises to the cell inner membrane. The protein resides in the cytoplasm. The enzyme catalyses ATP + H2O + cellular proteinSide 1 = ADP + phosphate + cellular proteinSide 2.. Part of the Sec protein translocase complex. Interacts with the SecYEG preprotein conducting channel. Has a central role in coupling the hydrolysis of ATP to the transfer of proteins into and across the cell membrane, serving as an ATP-driven molecular motor driving the stepwise translocation of polypeptide chains across the membrane. This Anaeromyxobacter sp. (strain Fw109-5) protein is Protein translocase subunit SecA.